The sequence spans 35 residues: uncharacterized protein (35 aa).

The span at 1-27 (MDQNEANIYNENNENNENNENENCQNE) shows a compositional bias: low complexity. The interval 1-35 (MDQNEANIYNENNENNENNENENCQNEPIRIKIII) is disordered.

This is an uncharacterized protein from Dictyostelium discoideum (Social amoeba).